The following is a 951-amino-acid chain: Valine--tRNA ligase (951 aa).

Positions 42-52 (PNVTGSLHMGH) match the 'HIGH' region motif. Residues 554–558 (KMSKS) carry the 'KMSKS' region motif. Lys-557 is an ATP binding site. A coiled-coil region spans residues 880–944 (AGLINKEDEL…AEAKAKLIEQ (65 aa)).

The protein belongs to the class-I aminoacyl-tRNA synthetase family. ValS type 1 subfamily. As to quaternary structure, monomer.

It is found in the cytoplasm. It catalyses the reaction tRNA(Val) + L-valine + ATP = L-valyl-tRNA(Val) + AMP + diphosphate. Its function is as follows. Catalyzes the attachment of valine to tRNA(Val). As ValRS can inadvertently accommodate and process structurally similar amino acids such as threonine, to avoid such errors, it has a 'posttransfer' editing activity that hydrolyzes mischarged Thr-tRNA(Val) in a tRNA-dependent manner. The protein is Valine--tRNA ligase of Shigella dysenteriae serotype 1 (strain Sd197).